A 505-amino-acid chain; its full sequence is Katanin p60 ATPase-containing subunit A-like 2 (505 aa).

A LisH domain is found at 25–57; it reads RRKNLLILIMHYLLQEGYVDSANSLEQETKISS. 2 disordered regions span residues 94 to 127 and 140 to 167; these read LDHDSRVQPKPRSAGKLRRAGSNSTQGLPRIGQQ and RTNGHQKALSRENSKQESGGNSPQEASE. Composition is skewed to polar residues over residues 114–127 and 155–164; these read GSNSTQGLPRIGQQ and QESGGNSPQE. 298 to 305 contributes to the ATP binding site; the sequence is GPPGTGKT.

The protein belongs to the AAA ATPase family. Katanin p60 subunit A1 subfamily. A-like 2 sub-subfamily.

It localises to the cytoplasm. The protein localises to the cytoskeleton. Its subcellular location is the spindle. The protein resides in the spindle pole. It carries out the reaction n ATP + n H2O + a microtubule = n ADP + n phosphate + (n+1) alpha/beta tubulin heterodimers.. Functionally, severs microtubules in vitro in an ATP-dependent manner. This activity may promote rapid reorganization of cellular microtubule arrays. The chain is Katanin p60 ATPase-containing subunit A-like 2 (katnal2) from Xenopus laevis (African clawed frog).